Consider the following 2126-residue polypeptide: Serine/threonine-protein kinase WNK1 (2126 aa).

2 disordered regions span residues 1-80 (MSDG…FFRR) and 93-202 (LPGL…QQQD). Phosphoserine is present on Ser-17. The segment covering 48 to 64 (RTEEYRRRRHTMDKDSR) has biased composition (basic and acidic residues). Thr-58 is subject to Phosphothreonine. Composition is skewed to low complexity over residues 101-111 (PQPSVPAVVPQ) and 127-141 (VASQVSQQPSAAASP). Residues Ser-165 and Ser-172 each carry the phosphoserine modification. The Protein kinase domain maps to 221 to 479 (LKFDIEIGRG…IKDLLNHAFF (259 aa)). An ATP-binding site is contributed by Ser-231. Chloride is bound by residues Phe-283 and Leu-299. Residues 301–304 (TELM) and Lys-351 each bind ATP. The Proton acceptor role is filled by Asp-368. Positions 369 and 371 each coordinate chloride. A phosphoserine; by autocatalysis mark is found at Ser-378 and Ser-382. Residues 488–555 (ELAEEDDGEK…VCEGDHKTMA (68 aa)) form an autoinhibitory domain region. Over residues 573–588 (QLVREEQEKRKQEESS) the composition is skewed to basic and acidic residues. A disordered region spans residues 573-865 (QLVREEQEKR…SRHEKTSRPK (293 aa)). Polar residues predominate over residues 593–614 (NEQQASVSQAGIQPLSVASTGI). The segment covering 615-626 (PTAPTTSASVST) has biased composition (low complexity). The interval 629–639 (EPEEPEADQHQ) is interaction with KLHL3. Polar residues-rich tracts occupy residues 638-682 (HQQL…GSQH), 695-705 (TVSSIQAQSQP), and 713-733 (SMAQGQNQGQPSSSLAGVLSS). The segment covering 734 to 746 (QPVQHPQQQGIQP) has biased composition (low complexity). Residues 750-789 (PQQAVQYSLPQAASSSEGTVQPVSQPQVSAGTQSSTQGVS) show a composition bias toward polar residues. Positions 793-823 (PPEQTPITQSQPTQPVPLVSSVDSAHSDVAS) are enriched in low complexity. Over residues 826 to 836 (SDGNENAPSSS) the composition is skewed to polar residues. Residues 844-865 (TKRHYRKSVRSRSRHEKTSRPK) are compositionally biased toward basic residues. Residues 1003–1006 (RFIV) carry the RFXV motif 1 motif. Ser-1007 carries the post-translational modification Phosphoserine. 2 disordered regions span residues 1474 to 1507 (GQVSTPGTHASAPASTATGAKPGTTPPKPSLTKT) and 1557 to 1595 (IPVTPAVGPLSTMSSTAVTEAGSQPQKDGTEVHVTASSS). A compositionally biased stretch (low complexity) spans 1477 to 1496 (STPGTHASAPASTATGAKPG). Over residues 1567-1583 (STMSSTAVTEAGSQPQK) the composition is skewed to polar residues. Residues 1604 to 1607 (RFQV) carry the RFXV motif 2 motif. The tract at residues 1610-1695 (TMDDAQKERK…TKVGRFQVTT (86 aa)) is disordered. Positions 1613–1629 (DAQKERKNRSEDTKSVH) are enriched in basic and acidic residues. Positions 1632-1650 (SSTSESSVLSSSSPESTLV) are enriched in low complexity. 2 consecutive short sequence motifs (RFXV motif) follow at residues 1690-1693 (RFQV) and 1702-1705 (RFSV). Residues 1709–1719 (EDKVTELKKEG) are compositionally biased toward basic and acidic residues. Disordered regions lie at residues 1709 to 1783 (EDKV…LCSK), 1856 to 1940 (VIIP…NLYS), and 1952 to 1990 (SLSAPGQGTSSTNTVGGTVSSQAAQAQPPAMTSSRKGTF). A Phosphoserine modification is found at Ser-1723. Residues 1738–1747 (PKKEKPELAE) show a composition bias toward basic and acidic residues. Residues Ser-1755, Ser-1756, Ser-1771, Ser-1773, Ser-1776, and Ser-1865 each carry the phosphoserine modification. Basic residues predominate over residues 1866–1878 (GRRRRPTKSKGSK). A compositionally biased stretch (low complexity) spans 1879–1889 (SSRSSSLGNKS). The segment covering 1890-1940 (PQLSGNLSGQSGTSVLNPQQTLHPPGNTPETGHNQLLQPLKPSPSSDNLYS) has biased composition (polar residues). A compositionally biased stretch (low complexity) spans 1957 to 1981 (GQGTSSTNTVGGTVSSQAAQAQPPA). The segment at 1985-2005 (SRKGTFTDDLHKLVDNWARDA) is amphipathic alpha-helix. Phosphoserine occurs at positions 2014 and 2030. The disordered stretch occupies residues 2076-2097 (PFGTQWSGTGGPAPQPLGQFQP). Phosphoserine occurs at positions 2114 and 2116.

Belongs to the protein kinase superfamily. Ser/Thr protein kinase family. WNK subfamily. Interacts with WNK3. Interacts with WNK4; inhibiting the activity of WNK4. Interacts with SGK1; promoting its activation. Associates with the mTORC2 complex. Interacts with UVRAG. Interacts (via amphipathic alpha-helix region) with EMC2; promoting the ER membrane protein complex assembly. In terms of assembly, interacts with isoform 1; inhibiting isoform 1 activity. Requires Mg(2+) as cofactor. Autophosphorylated at Ser-378 and Ser-382, promoting its activity. Autophosphorylation at Ser-382 is inhibited by intracellular calcium. Phosphorylation at Thr-58 increases ability to activate SGK1. In terms of processing, ubiquitinated by the BCR(KLHL3) complex, leading to its degradation. Also ubiquitinated by the BCR(KLHL2) complex. Post-translationally, may be O-glycosylated.

It localises to the cytoplasm. Its subcellular location is the nucleus. The protein localises to the cytoskeleton. It is found in the spindle. The catalysed reaction is L-seryl-[protein] + ATP = O-phospho-L-seryl-[protein] + ADP + H(+). It carries out the reaction L-threonyl-[protein] + ATP = O-phospho-L-threonyl-[protein] + ADP + H(+). Activated in response to hyperosmotic stress: cell shrinkage promotes formation of a membraneless compartment that concentrates WNK1 with its substrates, OXSR1/OSR1 and STK39/SPAK. Activation requires autophosphorylation of Ser-382 and, to a lower extent, Ser-378. Autophosphorylation and subsequent activation is inhibited by increases in intracellular ionic strength: Cl(-) potently inhibits WNK1 kinase activity via direct binding. Also inhibited by K(+) ions. Inhibited by Compound 12 ((5-Chloro-2-(2-((methyl-d3)amino)thiazol-4-yl)- pyridin-4-yl)(4-(4-chlorobenzyl)piperazin-1-yl)methanone). In terms of biological role, serine/threonine-protein kinase component of the WNK1-SPAK/OSR1 kinase cascade, which acts as a key regulator of blood pressure and regulatory volume increase by promoting ion influx. WNK1 mediates regulatory volume increase in response to hyperosmotic stress by acting as a molecular crowding sensor, which senses cell shrinkage and mediates formation of a membraneless compartment by undergoing liquid-liquid phase separation. The membraneless compartment concentrates WNK1 with its substrates, OXSR1/OSR1 and STK39/SPAK, promoting WNK1-dependent phosphorylation and activation of downstream kinases OXSR1/OSR1 and STK39/SPAK. Following activation, OXSR1/OSR1 and STK39/SPAK catalyze phosphorylation of ion cotransporters SLC12A1/NKCC2, SLC12A2/NKCC1, SLC12A5/KCC2 and SLC12A6/KCC3, regulating their activity. Phosphorylation of Na-K-Cl cotransporters SLC12A2/NKCC1 and SLC12A2/NKCC1 promote their activation and ion influx; simultaneously, phosphorylation of K-Cl cotransporters SLC12A5/KCC2 and SLC12A6/KCC3 inhibit their activity, blocking ion efflux. Also acts as a regulator of angiogenesis in endothelial cells. Also acts independently of the WNK1-SPAK/OSR1 kinase cascade by catalyzing phosphorylation of other substrates, such as SYT2, PCF11 and NEDD4L. Mediates phosphorylation of SYT2, regulating SYT2 association with phospholipids and membrane-binding. Regulates mRNA export in the nucleus by mediating phosphorylation of PCF11, thereby decreasing the association between PCF11 and POLR2A/RNA polymerase II and promoting mRNA export to the cytoplasm. Acts as a negative regulator of autophagy. Required for the abscission step during mitosis, independently of the WNK1-SPAK/OSR1 kinase cascade. WNK1 may also play a role in actin cytoskeletal reorganization. Also acts as a scaffold protein independently of its protein kinase activity: negatively regulates cell membrane localization of various transporters and channels, such as SLC4A4, SLC26A6, SLC26A9, TRPV4 and CFTR. Involved in the regulation of epithelial Na(+) channel (ENaC) by promoting activation of SGK1 in a kinase-independent manner. Probably activates SGK1 by acting as a scaffold protein that promotes the recruitment of SGK1 to the mTORC2 complex in response to chloride, leading to mTORC2-dependent phosphorylation and activation of SGK1. Acts as an assembly factor for the ER membrane protein complex independently of its protein kinase activity: associates with EMC2 in the cytoplasm via its amphipathic alpha-helix, and prevents EMC2 ubiquitination and subsequent degradation, thereby promoting EMC2 stabilization. Its function is as follows. Kinase-defective isoform specifically expressed in kidney, which acts as a dominant-negative regulator of the longer isoform 1. Does not directly inhibit WNK4 and has no direct effect on sodium and chloride ion transport. Down-regulates sodium-chloride cotransporter activity indirectly by inhibiting isoform 1, it associates with isoform 1 and attenuates its kinase activity. In kidney, may play an important role regulating sodium and potassium balance. Functionally, kinase-defective isoform produced by alternative promoter usage and alternative splicing. In Rattus norvegicus (Rat), this protein is Serine/threonine-protein kinase WNK1.